A 98-amino-acid chain; its full sequence is uncharacterized protein (98 aa).

It belongs to the Rv1128c/1148c/1588c/1702c/1945/3466 family.

This is an uncharacterized protein from Mycobacterium tuberculosis (strain ATCC 25618 / H37Rv).